Reading from the N-terminus, the 397-residue chain is L-asparaginase-like protein CG4372 (397 aa).

The signal sequence occupies residues 1–22 (MLAQSCCLRLLILLLLFTTIGS). Disulfide bonds link Cys-90-Cys-95, Cys-189-Cys-205, and Cys-344-Cys-371.

Belongs to the Ntn-hydrolase family.

This Drosophila melanogaster (Fruit fly) protein is L-asparaginase-like protein CG4372.